The chain runs to 262 residues: Ninja-family protein 2 (262 aa).

The interval 49–70 (RNSLACNTSKEAAGQSPKEMNA) is disordered.

This sequence belongs to the Ninja family.

It localises to the nucleus. The protein is Ninja-family protein 2 of Zea mays (Maize).